Reading from the N-terminus, the 148-residue chain is UPF0756 membrane protein YeaL (148 aa).

The next 4 membrane-spanning stretches (helical) occupy residues 14–34 (ALGFISHNTTVAVSILVLIIV), 51–71 (LSIGIIILTIGVMAPIASGTL), 86–106 (LVAIAVGVIVSWLGGRGVTLM), and 121–141 (VLGVALFRGVPVGPLIAAGLV).

Belongs to the UPF0756 family.

It is found in the cell membrane. The sequence is that of UPF0756 membrane protein YeaL from Shigella boydii serotype 18 (strain CDC 3083-94 / BS512).